The sequence spans 170 residues: MQNRTGLILCALALLMGFLMVCLGAFFISWGSIFDCQGSLIAAYLLLPLGFVILLSGIFWSNYRQVTESKGVLRHMLRQHLAHGALPVATVDRPDFYPPAYEESLEVEKQSCPAEREASGIPPPLYTETGLEFQDGNDSHPEAPPSYRESIAGLVVTAISEDAQRRGQEC.

2 helical membrane-spanning segments follow: residues 8–28 (ILCALALLMGFLMVCLGAFFI) and 40–60 (LIAAYLLLPLGFVILLSGIFW). The tract at residues 112–147 (CPAEREASGIPPPLYTETGLEFQDGNDSHPEAPPSY) is disordered.

The protein localises to the membrane. The polypeptide is Transmembrane protein 252 (TMEM252) (Homo sapiens (Human)).